The chain runs to 487 residues: MTTVEEDLLLNEPVATEYDGLTAIDEDFLLGAGDVSRKGTQESTDDLLGSSEPFDQEDILDTVPEQTDENEDEAGDDELESEKEELDYDEEEDDEDRRERTSRYTSEKKGSRKDSVEGDENKKENGQDETKRSGIPSLFDKTITNNPMKSGDQPIGVILRIEGEAERVFYPPPSFMEPKLNIVPRLPNGIPLIGVPSSHGRAGFGANYQDQARMAAGGGMAGMPMGWENQVNAFLNNTTKSKSRGRDTRKRRSSSYSSTSSSSDGRSRSRSSSRSDRRRRDDRKRPREDRDRKDYRRDGRRDGRRDDRKRHDDRRRDSYHRDSDKDIKRRKEQSKHSAMESAKALGLSNDYIDQVNEQKRKREEIVRKKEERRHAPVSEKKEVPTTVSTNTSSAAYANSKDKTKAYLAVNVTGVQQLPTAVKKIEAIASELGPIKKCWRSDEDVVSIIFNAHDKAKDFMLKHNGKVLSGLRITVSLEKKFLNLNDVN.

Disordered stretches follow at residues 35-153, 237-345, and 358-395; these read VSRK…SGDQ, NTTK…AKAL, and QKRK…SSAA. Acidic residues predominate over residues 54 to 96; that stretch reads FDQEDILDTVPEQTDENEDEAGDDELESEKEELDYDEEEDDED. The span at 97 to 132 shows a compositional bias: basic and acidic residues; it reads RRERTSRYTSEKKGSRKDSVEGDENKKENGQDETKR. Basic residues predominate over residues 241–253; sequence SKSRGRDTRKRRS. Residues 254-264 are compositionally biased toward low complexity; the sequence is SSYSSTSSSSD. Composition is skewed to basic and acidic residues over residues 273–338 and 358–383; these read SRSD…KHSA and QKRK…KKEV. Positions 385–395 are enriched in low complexity; it reads TTVSTNTSSAA.

This is an uncharacterized protein from Caenorhabditis elegans.